The following is a 403-amino-acid chain: Zinc finger HIT domain-containing protein 2 (403 aa).

Met-1 carries the N-acetylmethionine modification. Positions 7, 10, 22, 25, 30, 34, 38, and 41 each coordinate Zn(2+). An HIT-type zinc finger spans residues 7–41 (CGFCPAGEVQPARYTCPRCNAPYCSLRCYRTHGTC). Residues 72-98 (RQQRETEDEPGEAGLSSGPAPGGLSGL) are disordered. The residue at position 161 (Thr-161) is a Phosphothreonine.

As to quaternary structure, interacts (via HIT-type zinc finger) with RUVBL2 in the presence of ATP or ADP; shows a stronger interaction in the presence of ADP. As to expression, low expression in most tissues; highly expressed in testis.

Functionally, may act as a bridging factor mediating the interaction between the R2TP/Prefoldin-like (R2TP/PFDL) complex and U5 small nuclear ribonucleoprotein (U5 snRNP). Required for the interaction of R2TP complex subunit RPAP3 and prefoldin-like subunit URI1 with U5 snRNP proteins EFTUD2 and PRPF8. May play a role in regulating the composition of the U5 snRNP complex. The sequence is that of Zinc finger HIT domain-containing protein 2 (ZNHIT2) from Homo sapiens (Human).